The following is a 338-amino-acid chain: Ankyrin-repeat domain containing transcription coregulator asaA (338 aa).

Residues 1–10 (MGAPHEEIQA) are compositionally biased toward basic and acidic residues. Disordered stretches follow at residues 1-70 (MGAP…LRST) and 112-137 (ASSV…PFID). Basic residues predominate over residues 11 to 33 (LKRRREQNRLAQRRRRDNVRRRL). Polar residues predominate over residues 42-70 (SPASASQTSLCSSTDSRVTLNPHQSLRST). A compositionally biased stretch (low complexity) spans 112–130 (ASSVSPSSSAGPLSSSPSP). 3 ANK repeats span residues 235–264 (RWTT…DPNA), 268–297 (EGAT…DPTL), and 301–330 (AGWL…PVDY).

It functions in the pathway secondary metabolite biosynthesis. Transcription coregulator involved in regulation of gene cluster that mediates the biosynthesis of aspergillic acid, a hydroxamic acid-containing pyrazinone with aliphatic side chains that originates from leucine (Leu) and isoleucine (Ile). Aspergillic acid has antibiotic properties and was shown to be lethal to mice. This chain is Ankyrin-repeat domain containing transcription coregulator asaA, found in Aspergillus flavus (strain ATCC 200026 / FGSC A1120 / IAM 13836 / NRRL 3357 / JCM 12722 / SRRC 167).